Here is a 235-residue protein sequence, read N- to C-terminus: Uridylate kinase (235 aa).

Residue 8 to 11 (KLSG) participates in ATP binding. Glycine 49 contributes to the UMP binding site. ATP-binding residues include glycine 50 and arginine 54. 131 to 138 (TGNPYFST) contributes to the UMP binding site. 3 residues coordinate ATP: asparagine 159, tyrosine 165, and aspartate 168.

The protein belongs to the UMP kinase family. Homohexamer.

The protein localises to the cytoplasm. The enzyme catalyses UMP + ATP = UDP + ADP. Its pathway is pyrimidine metabolism; CTP biosynthesis via de novo pathway; UDP from UMP (UMPK route): step 1/1. Inhibited by UTP. Its function is as follows. Catalyzes the reversible phosphorylation of UMP to UDP. This is Uridylate kinase from Mycoplasma pneumoniae (strain ATCC 29342 / M129 / Subtype 1) (Mycoplasmoides pneumoniae).